The primary structure comprises 501 residues: Cytochrome P450 monooxygenase janQ (501 aa).

The chain crosses the membrane as a helical span at residues 1 to 16 (MVLGLLAFIWLMRAWR). N-linked (GlcNAc...) asparagine glycosylation occurs at Asn132. Cys439 lines the heme pocket.

Belongs to the cytochrome P450 family. It depends on heme as a cofactor.

It is found in the membrane. It participates in secondary metabolite biosynthesis. Functionally, cytochrome P450 monooxygenase; part of the gene cluster that mediates the biosynthesis of the indole diterpenes janthitremanes such as shearinine K or shearinine A. The geranylgeranyl diphosphate (GGPP) synthase janG catalyzes the first step in janthitremane biosynthesis via conversion of farnesyl pyrophosphate and isopentyl pyrophosphate into geranylgeranyl pyrophosphate (GGPP). Condensation of indole-3-glycerol phosphate with GGPP by the prenyl transferase janC then forms 3-geranylgeranylindole (3-GGI). Epoxidation by the FAD-dependent monooxygenase janM leads to a epoxidized-GGI that is substrate of the terpene cyclase janB for cyclization to yield paspaline. Paspaline is subsequently converted to 13-desoxypaspaline by the cytochrome P450 monooxygenase janP, via beta-PC-M6 in a series of alpha-face oxidations. The cytochrome P450 monooxygenase janQ is proposed to carry out sequential beta-face oxidation steps at C-7 and C-13 of 13-desoxypaspaline to form paspalicine and paspalinine respectively. The indole diterpene prenyltransferase janD may then convert paspalinine into shearinine K which is substrate of janO and/or additional enzymes for oxidation and cyclization to generate shearinine A. This chain is Cytochrome P450 monooxygenase janQ, found in Penicillium janthinellum (Penicillium vitale).